An 87-amino-acid chain; its full sequence is Toxin ICK-42 (87 aa).

A signal peptide spans 1–19 (MKPIVYMLLFCAFTVVILG). Cystine bridges form between cysteine 40/cysteine 54, cysteine 40/cysteine 77, cysteine 53/cysteine 66, and cysteine 80/cysteine 87.

Belongs to the neurotoxin 27 (Jztx-72) family. ICK-41 subfamily. As to expression, expressed by the venom gland.

The protein localises to the secreted. In terms of biological role, probable neurotoxin with ion channel impairing activity. The polypeptide is Toxin ICK-42 (Trittame loki (Brush-footed trapdoor spider)).